A 66-amino-acid chain; its full sequence is Large ribosomal subunit protein bL35 (66 aa).

The segment covering 1–28 (MPKMKTHRGSAKRFKRTGSGKLKRRHGF) has biased composition (basic residues). The tract at residues 1–50 (MPKMKTHRGSAKRFKRTGSGKLKRRHGFTSHMFANKSQKQKRKLRKSAMV) is disordered.

Belongs to the bacterial ribosomal protein bL35 family.

The protein is Large ribosomal subunit protein bL35 of Listeria monocytogenes serotype 4a (strain HCC23).